Here is a 451-residue protein sequence, read N- to C-terminus: Prenyltransferase asqH1 (451 aa).

The interval 14–37 is disordered; the sequence is AEDQSTRKVHWGQEGSGQSPEARP. L-tryptophan is bound at residue Glu120. Substrate is bound by residues Arg137, Arg274, Lys276, Tyr278, and Tyr373.

The protein belongs to the tryptophan dimethylallyltransferase family.

The catalysed reaction is quinolinone B + dimethylallyl diphosphate = peniprequinolone + diphosphate. It functions in the pathway secondary metabolite biosynthesis. It participates in alkaloid biosynthesis. The protein operates within mycotoxin biosynthesis. Prenyltransferase; part of the gene cluster that mediates the biosynthesis of the aspoquinolone mycotoxins. Within the pathway, the prenyltransferase asqH1 catalyzes the canonical Friedel-Crafts alkylation of quinolinone B with dimethylallyl cation to yield dimethylallyl quinolone. The first step of the pathway is catalyzed by the nonribosomal peptide synthetase asqK that condenses anthranilic acid and O-methyl-L-tyrosine to produce 4'-methoxycyclopeptin. 4'-methoxycyclopeptin is then converted to 4'-methoxydehydrocyclopeptin by the ketoglutarate-dependent dioxygenase asqJ. AsqJ also converts its first product 4'-methoxydehydrocyclopeptin to 4'-methoxycyclopenin. The following conversion of 4'-methoxycyclopenin into 4'-methoxyviridicatin is catalyzed by the cyclopenase asqI. 4'-methoxyviridicatin is the precursor of quinolone natural products, and is further converted to quinolinone B. The prenyltransferase asqH1 then catalyzes the canonical Friedel-Crafts alkylation of quinolinone B with dimethylallyl cation to yield dimethylallyl quinolone, which is subjected to FAD-dependent dehydrogenation by the FAD-linked oxidoreductase asqF to yield conjugated aryl diene. The delta(3') double bond then serves as the site of the second alkylation with DMAPP catalyzed by the prenyltransferase asqH2 to yield a carbenium ion intermediate, which can be attacked by H(2)O to yield a styrenyl quinolone containing a C3'-hydroxyprenyl chain. The FAD-dependent monooxygenase asqG performs epoxidation of the terminal C7'-C8' olefin. Finally, after dehydratation of the epoxide at C3 by asqC, the quinolone epoxide rearrangement protein asqO catalyzes an enzymatic 3-exo-tet cyclization to yield the cyclopropyl-THF ring system in aspoquinolone. The sequence is that of Prenyltransferase asqH1 from Emericella nidulans (strain FGSC A4 / ATCC 38163 / CBS 112.46 / NRRL 194 / M139) (Aspergillus nidulans).